Here is a 368-residue protein sequence, read N- to C-terminus: Glutamate 5-kinase 1 (368 aa).

Residue Lys12 coordinates ATP. Ser52, Asp135, and Asn147 together coordinate substrate. ATP-binding positions include Ser167 to Asp168 and Thr209 to Lys215. The PUA domain occupies Gln274–Lys348.

It belongs to the glutamate 5-kinase family.

It localises to the cytoplasm. It carries out the reaction L-glutamate + ATP = L-glutamyl 5-phosphate + ADP. Its pathway is amino-acid biosynthesis; L-proline biosynthesis; L-glutamate 5-semialdehyde from L-glutamate: step 1/2. In terms of biological role, catalyzes the transfer of a phosphate group to glutamate to form L-glutamate 5-phosphate. This chain is Glutamate 5-kinase 1, found in Pseudoalteromonas translucida (strain TAC 125).